A 183-amino-acid polypeptide reads, in one-letter code: Phosphopantetheine adenylyltransferase (183 aa).

Ser8 is a binding site for substrate. ATP is bound by residues Ser8 to Phe9 and His16. Lys40, Thr72, and Arg86 together coordinate substrate. Residues Gly87–Arg89, Glu97, and Tyr122–Ser128 each bind ATP.

This sequence belongs to the bacterial CoaD family. Homohexamer. The cofactor is Mg(2+).

The protein resides in the cytoplasm. The catalysed reaction is (R)-4'-phosphopantetheine + ATP + H(+) = 3'-dephospho-CoA + diphosphate. Its pathway is cofactor biosynthesis; coenzyme A biosynthesis; CoA from (R)-pantothenate: step 4/5. Functionally, reversibly transfers an adenylyl group from ATP to 4'-phosphopantetheine, yielding dephospho-CoA (dPCoA) and pyrophosphate. The sequence is that of Phosphopantetheine adenylyltransferase from Nostoc punctiforme (strain ATCC 29133 / PCC 73102).